A 356-amino-acid polypeptide reads, in one-letter code: CLIP domain-containing serine protease C9 (356 aa).

Residues 49–94 (SCDTPQVIGGKCMNISLCDPAFVHSIAYQEHTPVCQQNAFYRVICC) form the Clip domain. 4 cysteine pairs are disulfide-bonded: Cys50–Cys93, Cys60–Cys83, Cys66–Cys94, and Cys139–Cys155. Asn62 carries an N-linked (GlcNAc...) asparagine glycan. A Peptidase S1 domain is found at 109-351 (IMHGIEAEPG…YFGWIKETVS (243 aa)). Residues His154 and Asp194 each act as charge relay system in the active site. Cys258 and Cys284 are oxidised to a cystine. Residue Asn292 is glycosylated (N-linked (GlcNAc...) asparagine). A disulfide bridge connects residues Cys300 and Cys328. The active-site Charge relay system is the Ser304.

The protein belongs to the peptidase S1 family. CLIP subfamily. In terms of assembly, in the active form, heterodimer of a p12 subunit and a p30 subunit; disulfide-linked. In terms of processing, secreted as a full-length protein. Following bacterium E.coli infection, proteolytically cleaved into two chains, p12 and p30, which remain covalently linked.

The protein localises to the secreted. Its function is as follows. Probable serine protease which plays an essential role in the innate immune response against bacteria and protozoa infection by activating the melanization cascade. In the susceptible strain G3, appears to be dispensable for ookinete elimination which occurs by lysis. In Anopheles gambiae (African malaria mosquito), this protein is CLIP domain-containing serine protease C9.